The following is a 390-amino-acid chain: Queuine tRNA-ribosyltransferase (390 aa).

The active-site Proton acceptor is the D92. Residues 92-96 (DSGGF), D146, Q195, and G222 contribute to the substrate site. The segment at 253-259 (GVGTPED) is RNA binding. The Nucleophile role is filled by D272. The interval 277–281 (TRNAR) is RNA binding; important for wobble base 34 recognition. Residues C310, C312, C315, and H354 each contribute to the Zn(2+) site.

The protein belongs to the queuine tRNA-ribosyltransferase family. As to quaternary structure, homodimer. Within each dimer, one monomer is responsible for RNA recognition and catalysis, while the other monomer binds to the replacement base PreQ1. The cofactor is Zn(2+).

It carries out the reaction 7-aminomethyl-7-carbaguanine + guanosine(34) in tRNA = 7-aminomethyl-7-carbaguanosine(34) in tRNA + guanine. Its pathway is tRNA modification; tRNA-queuosine biosynthesis. Its function is as follows. Catalyzes the base-exchange of a guanine (G) residue with the queuine precursor 7-aminomethyl-7-deazaguanine (PreQ1) at position 34 (anticodon wobble position) in tRNAs with GU(N) anticodons (tRNA-Asp, -Asn, -His and -Tyr). Catalysis occurs through a double-displacement mechanism. The nucleophile active site attacks the C1' of nucleotide 34 to detach the guanine base from the RNA, forming a covalent enzyme-RNA intermediate. The proton acceptor active site deprotonates the incoming PreQ1, allowing a nucleophilic attack on the C1' of the ribose to form the product. After dissociation, two additional enzymatic reactions on the tRNA convert PreQ1 to queuine (Q), resulting in the hypermodified nucleoside queuosine (7-(((4,5-cis-dihydroxy-2-cyclopenten-1-yl)amino)methyl)-7-deazaguanosine). The sequence is that of Queuine tRNA-ribosyltransferase from Acidovorax sp. (strain JS42).